Reading from the N-terminus, the 492-residue chain is N-succinylglutamate 5-semialdehyde dehydrogenase (492 aa).

220–225 (GSASTG) is an NAD(+) binding site. Catalysis depends on residues Glu243 and Cys277.

It belongs to the aldehyde dehydrogenase family. AstD subfamily.

The enzyme catalyses N-succinyl-L-glutamate 5-semialdehyde + NAD(+) + H2O = N-succinyl-L-glutamate + NADH + 2 H(+). It participates in amino-acid degradation; L-arginine degradation via AST pathway; L-glutamate and succinate from L-arginine: step 4/5. In terms of biological role, catalyzes the NAD-dependent reduction of succinylglutamate semialdehyde into succinylglutamate. The polypeptide is N-succinylglutamate 5-semialdehyde dehydrogenase (Salmonella paratyphi A (strain AKU_12601)).